The primary structure comprises 135 residues: DFIIFFIFMFFSPSCILSQTLQESGPGTVKPSESLRLTCTVSGFELSSYHMHWIRQPPGKGLEWIGVIATGGSTAIADSLKNRVTITKDNGKKQVYLQMNGMEVKDTAMYYCAREYASGYNFDYWGQGTMVTVTS.

The first 18 residues, 1 to 18 (DFIIFFIFMFFSPSCILS), serve as a signal peptide directing secretion. In terms of domain architecture, Ig-like spans 20–128 (TLQESGPGTV…GYNFDYWGQG (109 aa)).

The polypeptide is Ig heavy chain V region XIG14 (Xenopus laevis (African clawed frog)).